A 139-amino-acid chain; its full sequence is Ribulose bisphosphate carboxylase small subunit (139 aa).

This sequence belongs to the RuBisCO small chain family. Heterohexadecamer of 8 large and 8 small subunits.

The protein localises to the plastid. It localises to the chloroplast. Functionally, ruBisCO catalyzes two reactions: the carboxylation of D-ribulose 1,5-bisphosphate, the primary event in carbon dioxide fixation, as well as the oxidative fragmentation of the pentose substrate in the photorespiration process. Both reactions occur simultaneously and in competition at the same active site. Although the small subunit is not catalytic it is essential for maximal activity. This Cylindrotheca sp. (strain N1) (Marine diatom) protein is Ribulose bisphosphate carboxylase small subunit.